A 126-amino-acid chain; its full sequence is Fluoride-specific ion channel FluC 3 (126 aa).

The next 4 helical transmembrane spans lie at 7–27 (MWVG…GLSI), 37–57 (LGTF…SILF), 68–87 (LMNT…FSSM), and 101–121 (AIAA…AAFG). Residues G79 and T82 each contribute to the Na(+) site.

This sequence belongs to the fluoride channel Fluc/FEX (TC 1.A.43) family.

It localises to the cell inner membrane. It carries out the reaction fluoride(in) = fluoride(out). Na(+) is not transported, but it plays an essential structural role and its presence is essential for fluoride channel function. Functionally, fluoride-specific ion channel. Important for reducing fluoride concentration in the cell, thus reducing its toxicity. In Yersinia pestis, this protein is Fluoride-specific ion channel FluC 3.